The sequence spans 456 residues: 5-hydroxytryptamine receptor 3E (456 aa).

The N-terminal stretch at 1–25 (MEGSWFHRKRFSFYLLLGFLLQGRG) is a signal peptide. Residues 26–248 (VTFTINCSGF…FYVAIRRRPS (223 aa)) are Extracellular-facing. Cys162 and Cys176 are disulfide-bonded. N-linked (GlcNAc...) asparagine glycosylation occurs at Asn175. The helical transmembrane segment at 249-269 (LYVINLLVPSGFLVAIDALSF) threads the bilayer. Residues 270-282 (YLPVKSGNRVPFK) are Cytoplasmic-facing. Residues 283–303 (ITLLLGYNVFLLMMSDLLPTS) form a helical membrane-spanning segment. Residues 304 to 307 (GTPL) lie on the Extracellular side of the membrane. A helical membrane pass occupies residues 308 to 328 (IGVYFALCLSLMVGSLLETIF). Residues 329–433 (ITHLLHVATT…WLQFSHAMDA (105 aa)) lie on the Cytoplasmic side of the membrane. The interval 401 to 432 (TGGSEWTRAQREHEAQKQHSVELWLQFSHAMD) is HA-stretch; determines single-channel conductance in 5-HT3 receptors. Residues 434–454 (MLFRLYLLFMASSIITVICLW) traverse the membrane as a helical segment. The Extracellular segment spans residues 455–456 (NT).

The protein belongs to the ligand-gated ion channel (TC 1.A.9) family. 5-hydroxytryptamine receptor (TC 1.A.9.2) subfamily. HTR3E sub-subfamily. As to quaternary structure, forms homopentameric as well as heteropentameric serotonin-activated cation-selective channel complexes with HTR3A. The homomeric complex is not functional. Heteropentameric complexes display properties which resemble that of neuronal serotonin-activated channels in vivo. As to expression, expressed in adult colon and intestine.

The protein localises to the postsynaptic cell membrane. It localises to the cell membrane. The enzyme catalyses Na(+)(in) = Na(+)(out). The catalysed reaction is K(+)(in) = K(+)(out). It catalyses the reaction Ca(2+)(in) = Ca(2+)(out). Its function is as follows. Forms serotonin (5-hydroxytryptamine/5-HT3)-activated cation-selective channel complexes, which when activated cause fast, depolarizing responses in neurons. This Homo sapiens (Human) protein is 5-hydroxytryptamine receptor 3E.